Here is a 293-residue protein sequence, read N- to C-terminus: uncharacterized protein (293 aa).

This is an uncharacterized protein from Bos taurus (Bovine).